Consider the following 609-residue polypeptide: Threonine--tRNA ligase (609 aa).

An editing domain region spans residues methionine 1 to valine 145. A catalytic region spans residues isoleucine 194–proline 485. Residues cysteine 286, histidine 338, and histidine 458 each contribute to the Zn(2+) site.

The protein belongs to the class-II aminoacyl-tRNA synthetase family. Homodimer. It depends on Zn(2+) as a cofactor.

The protein resides in the cytoplasm. The enzyme catalyses tRNA(Thr) + L-threonine + ATP = L-threonyl-tRNA(Thr) + AMP + diphosphate + H(+). Its function is as follows. Catalyzes the attachment of threonine to tRNA(Thr) in a two-step reaction: L-threonine is first activated by ATP to form Thr-AMP and then transferred to the acceptor end of tRNA(Thr). Also edits incorrectly charged L-seryl-tRNA(Thr). The polypeptide is Threonine--tRNA ligase (Methanosphaerula palustris (strain ATCC BAA-1556 / DSM 19958 / E1-9c)).